The chain runs to 749 residues: uncharacterized protein (749 aa).

The region spanning 63–243 is the Helicase ATP-binding domain; it reads FQYVQKGESI…QLTGKPMRLV (181 aa). An ATP-binding site is contributed by 76–83; that stretch reads TPTASGKT. The short motif at 185–188 is the DEVH box element; that stretch reads DELH. Positions 276–430 constitute a Helicase C-terminal domain; that stretch reads EVNELAKEFL…SARINPENLI (155 aa).

This sequence belongs to the helicase family.

This is an uncharacterized protein from Bacillus subtilis (strain 168).